The chain runs to 208 residues: Sodium/potassium-transporting ATPase subunit beta-1-interacting protein 2 (208 aa).

4 helical membrane-spanning segments follow: residues 1-23 (MGYC…CVLE), 35-55 (APIL…FGTI), 62-82 (ITGY…VICF), and 153-173 (LQIV…KCIT).

The protein belongs to the NKAIN family. In terms of assembly, interacts with ATP1B1. Expressed in fetal brain. Weakly expressed in adult brain and thymus. Not expressed in any other normal tissue examined.

The protein localises to the cell membrane. The chain is Sodium/potassium-transporting ATPase subunit beta-1-interacting protein 2 (NKAIN2) from Homo sapiens (Human).